A 40-amino-acid chain; its full sequence is Subtilisin-like serine protease AS-E1 (40 aa).

The Peptidase S8 domain occupies 4-40 (PWGLARISHRTTGATSYVYDDSAGEGTCSYIIDTGIY). Catalysis depends on aspartate 36, which acts as the Charge relay system.

The protein belongs to the peptidase S8 family. Homodimer.

Its activity is regulated as follows. Strongly inhibited by antipain and PMSF. Inhibited by benzamidine and aprotinin by 80% and 17% respectively. Little or no inhibition by EDTA, E-64, iodoacetic acid, leupeptin and FUT-175. Its function is as follows. Subtilisin-like serine protease. Cleaves prothrombin at 155-Arg-|-Ser-156, 45-Thr-|-Ala-46 and 316-Tyr-|-Ile-317 to produce meizothrombin(desF1)-like molecules. Degrades fibrinogen. Inhibits plasma coagulation. This Acremonium sp protein is Subtilisin-like serine protease AS-E1.